The chain runs to 543 residues: Cobyric acid synthase (543 aa).

The GATase cobBQ-type domain occupies 260–483 (MLDIVLVDLP…LHGVFDADGF (224 aa)). The active-site Nucleophile is Cys-346. His-475 is an active-site residue.

The protein belongs to the CobB/CobQ family. CobQ subfamily.

Its pathway is cofactor biosynthesis; adenosylcobalamin biosynthesis. Catalyzes amidations at positions B, D, E, and G on adenosylcobyrinic A,C-diamide. NH(2) groups are provided by glutamine, and one molecule of ATP is hydrogenolyzed for each amidation. The polypeptide is Cobyric acid synthase (Nitratidesulfovibrio vulgaris (strain ATCC 29579 / DSM 644 / CCUG 34227 / NCIMB 8303 / VKM B-1760 / Hildenborough) (Desulfovibrio vulgaris)).